We begin with the raw amino-acid sequence, 45 residues long: Scolopendra 20417.15 Da toxin (45 aa).

The disordered stretch occupies residues 26–45; the sequence is KVANGQEAGQPGAXNMKELH.

The protein belongs to the CRISP family. Venom allergen 5-like subfamily. Contains 3 disulfide bonds. In terms of tissue distribution, expressed by the venom gland.

The protein resides in the secreted. The chain is Scolopendra 20417.15 Da toxin from Scolopendra viridicornis nigra (Brazilian giant centipede).